The sequence spans 591 residues: MKILIIFIIFIISYISGFEIPKGFGIGLVIPDAECLNYIGDPIDQQLCNSKLQNNGDRIYTTTNSQIDSQTNIKKSFEAITFLQDQCKDLLFAQFGICDIYLAPCIEVTLTPLKSISLPQRFCKSVCDRMVSNCPRLEEQMDCSNSFLFPEIGTFYDLSPYGYTIDNGTFAVPCSDPTIFFNQVSSNSSFIEICPSPLLLKNSSDPEYAANKGYSYLSPSNCVLPCPVPNYSNQKWDQLLTMSKILSTISFILSLYNVLTFGIINKKVSDPHKCTCFFSGSIALVNLCDIITYGIGYEELLCPEPGRSAKQQLDPVCGLTGAFFHLGITYCVLWSMTMGLVLYCSVKRQKWFKFNYFLIGNTTFTITTVVIAAATSKFEAGLGSIECWIRDRWYAISLFWIPCGIALLIGSFCIIAVIHEVYKTSKKSISNRNDLLQRELKPLLIVIFISGSFLYLFIFFFDIERKFGGYRSAVEDYVLCLLNGSQEECFTTGPSYVPYFLFYLVIRWFGIIFFLFYGTSNIARKIWVQNKIWKSISSSISPKSTPKSSPKNSDSKINSNSTNNNNMILNDNNDKNLNEKKAVELESIKIN.

The signal sequence occupies residues 1-17; the sequence is MKILIIFIIFIISYISG. Residues 18-244 lie on the Extracellular side of the membrane; that stretch reads FEIPKGFGIG…KWDQLLTMSK (227 aa). Residues 30–177 form the FZ domain; it reads IPDAECLNYI…GTFAVPCSDP (148 aa). Cystine bridges form between cysteine 35/cysteine 105, cysteine 48/cysteine 98, and cysteine 123/cysteine 174. Residues asparagine 167, asparagine 187, asparagine 202, and asparagine 230 are each glycosylated (N-linked (GlcNAc...) asparagine). A helical membrane pass occupies residues 245–265; that stretch reads ILSTISFILSLYNVLTFGIIN. Over 266-275 the chain is Cytoplasmic; the sequence is KKVSDPHKCT. Residues 276 to 296 traverse the membrane as a helical segment; the sequence is CFFSGSIALVNLCDIITYGIG. Over 297-321 the chain is Extracellular; the sequence is YEELLCPEPGRSAKQQLDPVCGLTG. The helical transmembrane segment at 322-342 threads the bilayer; it reads AFFHLGITYCVLWSMTMGLVL. The Cytoplasmic segment spans residues 343-353; that stretch reads YCSVKRQKWFK. The chain crosses the membrane as a helical span at residues 354-374; that stretch reads FNYFLIGNTTFTITTVVIAAA. Residues 375-397 are Extracellular-facing; the sequence is TSKFEAGLGSIECWIRDRWYAIS. Residues 398-418 traverse the membrane as a helical segment; sequence LFWIPCGIALLIGSFCIIAVI. The Cytoplasmic segment spans residues 419–442; sequence HEVYKTSKKSISNRNDLLQRELKP. Residues 443-463 traverse the membrane as a helical segment; the sequence is LLIVIFISGSFLYLFIFFFDI. At 464 to 495 the chain is on the extracellular side; it reads ERKFGGYRSAVEDYVLCLLNGSQEECFTTGPS. N-linked (GlcNAc...) asparagine glycosylation is present at asparagine 483. A helical membrane pass occupies residues 496–516; it reads YVPYFLFYLVIRWFGIIFFLF. Residues 517–591 lie on the Cytoplasmic side of the membrane; the sequence is YGTSNIARKI…AVELESIKIN (75 aa). A compositionally biased stretch (low complexity) spans 538–571; sequence SSISPKSTPKSSPKNSDSKINSNSTNNNNMILND. Residues 538–573 are disordered; sequence SSISPKSTPKSSPKNSDSKINSNSTNNNNMILNDNN.

The protein belongs to the G-protein coupled receptor Fz/Smo family.

Its subcellular location is the membrane. The sequence is that of Frizzled and smoothened-like protein F (fslF) from Dictyostelium discoideum (Social amoeba).